The sequence spans 326 residues: DNA repair protein XRCC4 (326 aa).

Residues 1–212 (MERKVSRIYL…QLEESTKPER (212 aa)) form an interaction with IFFO1 region. S53 bears the Phosphoserine; by PRKDC mark. 2 coiled-coil regions span residues 131–165 (LDTITEKQAKNEHLQKENERLLRDWNDVQGRFEKC) and 185–209 (NEKKTKIRSLHKLLNEVQQLEESTK). An interaction with LIG4 region spans residues 180 to 211 (FILVLNEKKTKIRSLHKLLNEVQQLEESTKPE). S193 is modified (phosphoserine; by PRKDC). Positions 203–326 (QLEESTKPER…RNSSPEDLFD (124 aa)) are disordered. A compositionally biased stretch (basic and acidic residues) spans 206–226 (ESTKPERENPCSDKTPEEHGL). At Y227 the chain carries Phosphotyrosine. Phosphoserine is present on S230. T231 carries the phosphothreonine modification. S235 is subject to Phosphoserine. The residue at position 244 (T244) is a Phosphothreonine. S250 carries the phosphoserine modification. S254 carries the phosphoserine; by PRKDC modification. The Nuclear localization signal motif lies at 264–269 (RKRRHR). Residue K290 forms a Glycyl lysine isopeptide (Lys-Gly) (interchain with G-Cter in ubiquitin) linkage. S295 carries the phosphoserine; by PRKDC modification. The residue at position 296 (S296) is a Phosphoserine. Residues S307 and S312 each carry the phosphoserine; by PRKDC modification. Polar residues predominate over residues 307–326 (SAENMSLETLRNSSPEDLFD). T315 bears the Phosphothreonine; by PRKDC mark. Phosphoserine; by PRKDC occurs at positions 319 and 320.

The protein belongs to the XRCC4-XLF family. XRCC4 subfamily. Homodimer and homotetramer in solution. Interacts with NHEJ1/XLF; the interaction is direct and is mediated via a head-to-head interaction between N-terminal head regions. Interacts with LIG4; the LIG4-XRCC4 subcomplex has a 1:2 stoichiometry and XRCC4 is required for LIG4 stability. Component of the core long-range non-homologous end joining (NHEJ) complex (also named DNA-PK complex) composed of PRKDC, LIG4, XRCC4, XRCC6/Ku70, XRCC5/Ku86 and NHEJ1/XLF. Additional component of the NHEJ complex includes PAXX. Following autophosphorylation, PRKDC dissociates from DNA, leading to formation of the short-range NHEJ complex, composed of LIG4, XRCC4, XRCC6/Ku70, XRCC5/Ku86 and NHEJ1/XLF. Interacts with PRKDC; the interaction is direct. Interacts with XRCC6/Ku70; the interaction is direct. Interacts with APTX and APLF. Forms a heterotetramer with IFFO1; the interaction involves LIG4-free XRCC4 and leads to the relocalization of IFFO1 to the sites of DNA damage. Interacts with PNKP; mainly interacts with PNKP when phosphorylated at Thr-231, but is also able to interact at much lower level with PNKP when not unphosphorylated. Interacts with POLL (DNA polymerase lambda). In terms of assembly, interacts with XKR4; interacts with the processed form of XKR4, which is cleaved by caspase. Post-translationally, phosphorylated by PRKDC at the C-terminus in response to DNA damage; Ser-254 and Ser-312 constitute the main phosphorylation sites. Phosphorylation by PRKDC at the C-terminus of XRCC4 and NHEJ1/XLF are highly redundant and regulate ability of the XRCC4-NHEJ1/XLF subcomplex to bridge DNA. Phosphorylation by PRKDC does not prevent interaction with NHEJ1/XLF but disrupts ability to bridge DNA and promotes detachment from DNA. Phosphorylation at Ser-319 and Ser-320 by PRKDC promotes recognition by the SCF(FBXW7) complex and subsequent ubiquitination via 'Lys-63'-linked ubiquitin. Phosphorylation at Thr-231 by CK2 promotes interaction with PNKP; regulating PNKP activity and localization to DNA damage sites. Phosphorylation by CK2 promotes interaction with APTX. Ubiquitinated at Lys-290 by the SCF(FBXW7) complex via 'Lys-63'-linked ubiquitination, thereby promoting double-strand break repair: the SCF(FBXW7) complex specifically recognizes XRCC4 when phosphorylated at Ser-319 and Ser-320 by PRKDC, and 'Lys-63'-linked ubiquitination facilitates DNA non-homologous end joining (NHEJ) by enhancing association with XRCC5/Ku80 and XRCC6/Ku70. Monoubiquitinated. In terms of processing, undergoes proteolytic processing by caspase-3 (CASP3). This generates the protein XRCC4, C-terminus (XRCC4/C), which translocates to the cytoplasm and activates phospholipid scramblase activity of XKR4, thereby promoting phosphatidylserine exposure on apoptotic cell surface.

The protein localises to the nucleus. The protein resides in the chromosome. It localises to the cytoplasm. Its function is as follows. DNA non-homologous end joining (NHEJ) core factor, required for double-strand break repair and V(D)J recombination. Acts as a scaffold protein that regulates recruitment of other proteins to DNA double-strand breaks (DSBs). Associates with NHEJ1/XLF to form alternating helical filaments that bridge DNA and act like a bandage, holding together the broken DNA until it is repaired. The XRCC4-NHEJ1/XLF subcomplex binds to the DNA fragments of a DSB in a highly diffusive manner and robustly bridges two independent DNA molecules, holding the broken DNA fragments in close proximity to one other. The mobility of the bridges ensures that the ends remain accessible for further processing by other repair factors. Plays a key role in the NHEJ ligation step of the broken DNA during DSB repair via direct interaction with DNA ligase IV (LIG4): the LIG4-XRCC4 subcomplex reseals the DNA breaks after the gap filling is completed. XRCC4 stabilizes LIG4, regulates its subcellular localization and enhances LIG4's joining activity. Binding of the LIG4-XRCC4 subcomplex to DNA ends is dependent on the assembly of the DNA-dependent protein kinase complex DNA-PK to these DNA ends. Promotes displacement of PNKP from processed strand break termini. Acts as an activator of the phospholipid scramblase activity of XKR4. This form, which is generated upon caspase-3 (CASP3) cleavage, translocates into the cytoplasm and interacts with XKR4, thereby promoting phosphatidylserine scramblase activity of XKR4 and leading to phosphatidylserine exposure on apoptotic cell surface. The sequence is that of DNA repair protein XRCC4 from Mus musculus (Mouse).